Consider the following 261-residue polypeptide: Proliferating cell nuclear antigen (261 aa).

N6-acetyllysine is present on residues Lys-14, Lys-77, and Lys-80. The DNA-binding element occupies 61–80; sequence RCDRNLAMGVNLTSMSKILK. A disulfide bridge connects residues Cys-135 and Cys-162. A Glycyl lysine isopeptide (Lys-Gly) (interchain with G-Cter in SUMO2); alternate cross-link involves residue Lys-164. A Glycyl lysine isopeptide (Lys-Gly) (interchain with G-Cter in ubiquitin); alternate cross-link involves residue Lys-164. A Phosphotyrosine; by EGFR modification is found at Tyr-211. Lys-248 bears the N6-acetyllysine mark. Lys-254 participates in a covalent cross-link: Glycyl lysine isopeptide (Lys-Gly) (interchain with G-Cter in SUMO2).

This sequence belongs to the PCNA family. In terms of assembly, homotrimer. Interacts with p300/EP300; the interaction occurs on chromatin in UV-irradiated damaged cells. Interacts with CREBBP (via transactivation domain and C-terminus); the interaction occurs on chromatin in UV-irradiated damaged cells. Directly interacts with POLD1, POLD3 and POLD4 subunits of the DNA polymerase delta complex, POLD3 being the major interacting partner; the interaction with POLD3 is inhibited by CDKN1A/p21(CIP1). Forms a complex with activator 1 heteropentamer in the presence of ATP. Interacts with EXO1, POLH, POLK, DNMT1, ERCC5, FEN1, CDC6 and POLDIP2. Interacts with POLB. Interacts with APEX2; this interaction is triggered by reactive oxygen species and increased by misincorporation of uracil in nuclear DNA. Forms a ternary complex with DNTTIP2 and core histone. Interacts with KCTD10. Interacts with PPP1R15A. Interacts with SMARCA5/SNF2H. Interacts with BAZ1B/WSTF; the interaction is direct and is required for BAZ1B/WSTF binding to replication foci during S phase. Interacts with HLTF and SHPRH. Interacts with NUDT15. Interaction is disrupted in response to UV irradiation and acetylation. Interacts with CDKN1A/p21(CIP1) and CDT1; interacts via their PIP-box which also recruits the DCX(DTL) complex. The interaction with CDKN1A inhibits POLD3 binding. Interacts with DDX11. Interacts with EGFR; positively regulates PCNA. Interacts with PARPBP. Interacts (when ubiquitinated) with SPRTN; leading to enhance RAD18-mediated PCNA ubiquitination. Interacts (when polyubiquitinated) with ZRANB3. Interacts with SMARCAD1. Interacts with CDKN1C. Interacts with PCLAF (via PIP-box). Interacts with RTEL1 (via PIP-box); the interaction is direct and essential for the suppression of telomere fragility. Interacts with FAM111A (via PIP-box); the interaction is direct and required for PCNA loading on chromatin binding. Interacts with LIG1. Interacts with SETMAR. Interacts with ANKRD17. Interacts with FBXO18/FBH1 (via PIP-box); the interaction recruits the DCX(DTL) complex and promotes ubiquitination and degradation of FBXO18/FBH1. Interacts with POLN. Interacts with SDE2 (via PIP-box); the interaction is direct and prevents ultraviolet light induced monoubiquitination. Component of the replisome complex composed of at least DONSON, MCM2, MCM7, PCNA and TICRR; interaction at least with PCNA occurs during DNA replication. Interacts with MAPK15; the interaction is chromatin binding dependent and prevents MDM2-mediated PCNA destruction by inhibiting the association of PCNA with MDM2. Interacts with PARP10 (via PIP-box). Interacts with DDI2. Interacts with HMCES (via PIP-box). Interacts with TRAIP (via PIP-box). Interacts with UHRF2. Interacts with ALKBH2; this interaction is enhanced during the S-phase of the cell cycle. Interacts with ATAD5; the interaction promotes USP1-mediated PCNA deubiquitination. Interacts (when phosphorylated) with GRB2. Interacts with ANG. Interacts with nuclear UNG; this interaction mediates UNG recruitment to S-phase replication foci. Interacts with ERCC6L2 (via an atypical PIP-box); this interaction facilitates cenrtomeric localization of ERCC6L2. Phosphorylated. Phosphorylation at Tyr-211 by EGFR stabilizes chromatin-associated PCNA. In terms of processing, acetylated by CREBBP and p300/EP300; preferentially acetylated by CREBBP on Lys-80, Lys-13 and Lys-14 and on Lys-77 by p300/EP300 upon loading on chromatin in response to UV irradiation. Lysine acetylation disrupts association with chromatin, hence promoting PCNA ubiquitination and proteasomal degradation in response to UV damage in a CREBBP- and EP300-dependent manner. Acetylation disrupts interaction with NUDT15 and promotes degradation. Post-translationally, ubiquitinated. Following DNA damage, can be either monoubiquitinated to stimulate direct bypass of DNA lesions by specialized DNA polymerases or polyubiquitinated to promote recombination-dependent DNA synthesis across DNA lesions by template switching mechanisms. Following induction of replication stress, monoubiquitinated by the UBE2B-RAD18 complex on Lys-164, leading to recruit translesion (TLS) polymerases, which are able to synthesize across DNA lesions in a potentially error-prone manner. An error-free pathway also exists and requires non-canonical polyubiquitination on Lys-164 through 'Lys-63' linkage of ubiquitin moieties by the E2 complex UBE2N-UBE2V2 and the E3 ligases, HLTF, RNF8 and SHPRH. This error-free pathway, also known as template switching, employs recombination mechanisms to synthesize across the lesion, using as a template the undamaged, newly synthesized strand of the sister chromatid. Monoubiquitination at Lys-164 also takes place in undamaged proliferating cells, and is mediated by the DCX(DTL) complex, leading to enhance PCNA-dependent translesion DNA synthesis. Sumoylated during S phase. Methylated on glutamate residues by ARMT1.

Its subcellular location is the nucleus. Its function is as follows. Auxiliary protein of DNA polymerase delta and epsilon, is involved in the control of eukaryotic DNA replication by increasing the polymerase's processibility during elongation of the leading strand. Induces a robust stimulatory effect on the 3'-5' exonuclease and 3'-phosphodiesterase, but not apurinic-apyrimidinic (AP) endonuclease, APEX2 activities. Has to be loaded onto DNA in order to be able to stimulate APEX2. Plays a key role in DNA damage response (DDR) by being conveniently positioned at the replication fork to coordinate DNA replication with DNA repair and DNA damage tolerance pathways. Acts as a loading platform to recruit DDR proteins that allow completion of DNA replication after DNA damage and promote postreplication repair: Monoubiquitinated PCNA leads to recruitment of translesion (TLS) polymerases, while 'Lys-63'-linked polyubiquitination of PCNA is involved in error-free pathway and employs recombination mechanisms to synthesize across the lesion. This is Proliferating cell nuclear antigen (Pcna) from Rattus norvegicus (Rat).